Here is a 258-residue protein sequence, read N- to C-terminus: tRNA pseudouridine synthase A (258 aa).

The active-site Nucleophile is the Asp52. Tyr110 serves as a coordination point for substrate.

It belongs to the tRNA pseudouridine synthase TruA family. Homodimer.

It catalyses the reaction uridine(38/39/40) in tRNA = pseudouridine(38/39/40) in tRNA. In terms of biological role, formation of pseudouridine at positions 38, 39 and 40 in the anticodon stem and loop of transfer RNAs. This chain is tRNA pseudouridine synthase A, found in Francisella tularensis subsp. novicida (strain U112).